A 473-amino-acid polypeptide reads, in one-letter code: uncharacterized protein (473 aa).

The tract at residues 1–86 (MSSSPTESEI…NTSNYGSSRD (86 aa)) is disordered. Over residues 10 to 19 (ILPKESHNSI) the composition is skewed to basic and acidic residues. 2 stretches are compositionally biased toward polar residues: residues 20-39 (DEQS…NSFN) and 55-68 (EPVQ…PNMA). The residue at position 64 (serine 64) is a Phosphoserine. The span at 69-83 (SNESGNSENTSNYGS) shows a compositional bias: low complexity. RRM domains lie at 95 to 165 (LWMG…NHLF), 188 to 260 (IFVG…PIRV), and 305 to 370 (VFVG…RIRL). A disordered region spans residues 448 to 473 (MHIPENGNSDTMPVPNTQGKHLSAEE). A compositionally biased stretch (polar residues) spans 453-467 (NGNSDTMPVPNTQGK).

This is an uncharacterized protein from Schizosaccharomyces pombe (strain 972 / ATCC 24843) (Fission yeast).